Consider the following 269-residue polypeptide: Formamidopyrimidine-DNA glycosylase (269 aa).

P2 serves as the catalytic Schiff-base intermediate with DNA. The active-site Proton donor is E3. K57 (proton donor; for beta-elimination activity) is an active-site residue. DNA-binding residues include H90, R109, and R150. An FPG-type zinc finger spans residues 235 to 269 (QVYGRAGEACLTCGTTIKRSKHGQRTTFYCPHCQR). Catalysis depends on R259, which acts as the Proton donor; for delta-elimination activity.

The protein belongs to the FPG family. Monomer. The cofactor is Zn(2+).

The catalysed reaction is Hydrolysis of DNA containing ring-opened 7-methylguanine residues, releasing 2,6-diamino-4-hydroxy-5-(N-methyl)formamidopyrimidine.. The enzyme catalyses 2'-deoxyribonucleotide-(2'-deoxyribose 5'-phosphate)-2'-deoxyribonucleotide-DNA = a 3'-end 2'-deoxyribonucleotide-(2,3-dehydro-2,3-deoxyribose 5'-phosphate)-DNA + a 5'-end 5'-phospho-2'-deoxyribonucleoside-DNA + H(+). Its function is as follows. Involved in base excision repair of DNA damaged by oxidation or by mutagenic agents. Acts as a DNA glycosylase that recognizes and removes damaged bases. Has a preference for oxidized purines, such as 7,8-dihydro-8-oxoguanine (8-oxoG). Has AP (apurinic/apyrimidinic) lyase activity and introduces nicks in the DNA strand. Cleaves the DNA backbone by beta-delta elimination to generate a single-strand break at the site of the removed base with both 3'- and 5'-phosphates. The sequence is that of Formamidopyrimidine-DNA glycosylase from Edwardsiella ictaluri (strain 93-146).